A 270-amino-acid chain; its full sequence is Proteasome subunit beta (270 aa).

Residues 1–47 constitute a propeptide, removed in mature form; by autocatalysis; it reads MSNRGRLGDAFLRPGSSSFLDFLSDHAPELLPGRSAAAGNAPLAPHA. The Nucleophile role is filled by T48.

It belongs to the peptidase T1B family. In terms of assembly, the 20S proteasome core is composed of 14 alpha and 14 beta subunits that assemble into four stacked heptameric rings, resulting in a barrel-shaped structure. The two inner rings, each composed of seven catalytic beta subunits, are sandwiched by two outer rings, each composed of seven alpha subunits. The catalytic chamber with the active sites is on the inside of the barrel. Has a gated structure, the ends of the cylinder being occluded by the N-termini of the alpha-subunits. Is capped by the proteasome-associated ATPase, ARC.

Its subcellular location is the cytoplasm. It carries out the reaction Cleavage of peptide bonds with very broad specificity.. The protein operates within protein degradation; proteasomal Pup-dependent pathway. Its activity is regulated as follows. The formation of the proteasomal ATPase ARC-20S proteasome complex, likely via the docking of the C-termini of ARC into the intersubunit pockets in the alpha-rings, may trigger opening of the gate for substrate entry. Interconversion between the open-gate and close-gate conformations leads to a dynamic regulation of the 20S proteasome proteolysis activity. Functionally, component of the proteasome core, a large protease complex with broad specificity involved in protein degradation. The protein is Proteasome subunit beta of Xylanimonas cellulosilytica (strain DSM 15894 / JCM 12276 / CECT 5975 / KCTC 9989 / LMG 20990 / NBRC 107835 / XIL07).